A 241-amino-acid polypeptide reads, in one-letter code: N-acetylmuramoyl-L-alanine amidase Rv3717 (241 aa).

The signal sequence occupies residues methionine 1 to isoleucine 24. The MurNAc-LAA domain occupies valine 29–valine 230. Position 35 (histidine 35) interacts with Zn(2+). A disordered region spans residues arginine 45 to proline 69. The segment covering lysine 55–glycine 67 has biased composition (polar residues). A disulfide bridge links cysteine 57 with cysteine 105. Residues glutamate 70 and histidine 125 each contribute to the Zn(2+) site. The active-site Proton donor/acceptor is the glutamate 200.

The protein belongs to the N-acetylmuramoyl-L-alanine amidase 3 family. In terms of assembly, monomer. Requires Zn(2+) as cofactor.

The protein localises to the periplasm. It catalyses the reaction Hydrolyzes the link between N-acetylmuramoyl residues and L-amino acid residues in certain cell-wall glycopeptides.. It participates in cell wall degradation; peptidoglycan degradation. Its activity is regulated as follows. The structure reveals a short flexible hairpin turn that partially occludes the active site and may be involved in autoregulation. Its function is as follows. Cell-wall hydrolase that hydrolyzes the amide bond between N-acetylmuramic acid and L-alanine in cell-wall glycopeptides. Is able to hydrolyze the cell walls of several bacterial species (i.e. Paenibacillus sp., B.avium, E.coli DH5alpha, E.aerogenes, L.acidophilus, B.thuringiensis, B.pumilus, B.subtilis and E.coli W3110), thereby showing that it is a cell-wall hydrolase with broad-spectrum activity. May have a role in peptidoglycan fragment recycling. The sequence is that of N-acetylmuramoyl-L-alanine amidase Rv3717 from Mycobacterium tuberculosis (strain ATCC 25618 / H37Rv).